Here is a 163-residue protein sequence, read N- to C-terminus: Probable chemoreceptor glutamine deamidase CheD (163 aa).

Belongs to the CheD family.

It carries out the reaction L-glutaminyl-[protein] + H2O = L-glutamyl-[protein] + NH4(+). In terms of biological role, probably deamidates glutamine residues to glutamate on methyl-accepting chemotaxis receptors (MCPs), playing an important role in chemotaxis. This is Probable chemoreceptor glutamine deamidase CheD from Borrelia garinii subsp. bavariensis (strain ATCC BAA-2496 / DSM 23469 / PBi) (Borreliella bavariensis).